A 196-amino-acid chain; its full sequence is Small ribosomal subunit protein uS4c (196 aa).

The disordered stretch occupies residues 16-36 (GTLPGLTSKRPKSGSDLKTQL). Residues 89-150 (MRLDNILFRL…KQRSKALIQN (62 aa)) enclose the S4 RNA-binding domain.

Belongs to the universal ribosomal protein uS4 family. In terms of assembly, part of the 30S ribosomal subunit. Contacts protein S5. The interaction surface between S4 and S5 is involved in control of translational fidelity.

Its subcellular location is the plastid. It is found in the chloroplast. One of the primary rRNA binding proteins, it binds directly to 16S rRNA where it nucleates assembly of the body of the 30S subunit. Its function is as follows. With S5 and S12 plays an important role in translational accuracy. The sequence is that of Small ribosomal subunit protein uS4c (rps4) from Rhapis humilis (Slender lady palm).